The primary structure comprises 402 residues: MTVTLCSPTEDDWPGMFLLAAASFTDFIGPESATAWRTLVPTDGAVVVRDGAGPGSEVVGMALYMDLRLTVPGEVVLPTAGLSFVAVAPTHRRRGLLRAMCAELHRRIADSGYPVAALHASEGGIYGRFGYGPATTLHELTVDRRFARFHADAPGGGLGGSSVRLVRPTEHRGEFEAIYERWRQQVPGGLLRPQVLWDELLAECKAAPGGDRESFALLHPDGYALYRVDRTDLKLARVSELRAVTADAHCALWRALIGLDSMERISIITHPQDPLPHLLTDTRLARTTWRQDGLWLRIMNVPAALEARGYAHEVGEFSTVLEVSDGGRFALKIGDGRARCTPTDAAAEIEMDRDVLGSLYLGAHRASTLAAANRLRTKDSQLLRRLDAAFASDVPVQTAFEF.

In terms of domain architecture, N-acetyltransferase spans 3-154; that stretch reads VTLCSPTEDD…RFARFHADAP (152 aa). Acetyl-CoA-binding positions include 85 to 87, 93 to 98, and 121 to 122; these read VAV, RRGLLR, and SE. Tyrosine 126 acts as the Proton donor in catalysis. The active-site Proton acceptor; via carboxylate is phenylalanine 402.

This sequence belongs to the acetyltransferase Eis family. In terms of assembly, homohexamer; trimer of dimers.

The protein resides in the secreted. It localises to the host cytoplasmic vesicle. It is found in the host phagosome. Its subcellular location is the extracellular vesicle. The protein localises to the bacterial extracellular vesicle. The protein resides in the host extracellular space. It carries out the reaction L-lysyl-[protein] + acetyl-CoA = N(6)-acetyl-L-lysyl-[protein] + CoA + H(+). Its function is as follows. Effector that is released into the host cell and affects host immune responses. Acts as an acetyltransferase that acetylates lysine residues of host proteins. This Mycobacterium bovis (strain BCG / Pasteur 1173P2) protein is N-acetyltransferase Eis.